Consider the following 190-residue polypeptide: uncharacterized protein (190 aa).

This is an uncharacterized protein from Acanthamoeba polyphaga mimivirus (APMV).